Consider the following 583-residue polypeptide: ATP-dependent lipid A-core flippase (583 aa).

The next 5 membrane-spanning stretches (helical) occupy residues 27-47, 69-89, 142-162, 165-185, and 249-269; these read LAVA…MVSL, LLVF…TYCL, ALVS…LMFY, WQLS…IGFV, and AAAN…VLYL. Residues 28–310 form the ABC transmembrane type-1 domain; sequence AVAVVALIIN…LTNVTSQFQR (283 aa). Residues 342–578 form the ABC transporter domain; it reads VNVKDISFTY…DGAYAQLHRI (237 aa). An ATP-binding site is contributed by 376–383; it reads GRSGSGKS.

Belongs to the ABC transporter superfamily. Lipid exporter (TC 3.A.1.106) family. In terms of assembly, homodimer.

Its subcellular location is the cell inner membrane. It carries out the reaction ATP + H2O + lipid A-core oligosaccharideSide 1 = ADP + phosphate + lipid A-core oligosaccharideSide 2.. Involved in lipopolysaccharide (LPS) biosynthesis. Translocates lipid A-core from the inner to the outer leaflet of the inner membrane. Transmembrane domains (TMD) form a pore in the inner membrane and the ATP-binding domain (NBD) is responsible for energy generation. This is ATP-dependent lipid A-core flippase from Vibrio vulnificus (strain YJ016).